A 408-amino-acid polypeptide reads, in one-letter code: Formate-dependent phosphoribosylglycinamide formyltransferase (408 aa).

N(1)-(5-phospho-beta-D-ribosyl)glycinamide contacts are provided by residues 25 to 26 and Glu-85; that span reads EL. Residues Arg-118, Lys-159, 164-169, 199-202, and Glu-207 each bind ATP; these read SSGKGQ and EAFV. An ATP-grasp domain is found at 123 to 318; the sequence is KLAAEELGLP…EFELHAKAIL (196 aa). Mg(2+) is bound by residues Glu-277 and Glu-289. N(1)-(5-phospho-beta-D-ribosyl)glycinamide-binding positions include Asp-296, Lys-365, and 372–373; that span reads RR.

This sequence belongs to the PurK/PurT family. Homodimer.

It carries out the reaction N(1)-(5-phospho-beta-D-ribosyl)glycinamide + formate + ATP = N(2)-formyl-N(1)-(5-phospho-beta-D-ribosyl)glycinamide + ADP + phosphate + H(+). It participates in purine metabolism; IMP biosynthesis via de novo pathway; N(2)-formyl-N(1)-(5-phospho-D-ribosyl)glycinamide from N(1)-(5-phospho-D-ribosyl)glycinamide (formate route): step 1/1. Involved in the de novo purine biosynthesis. Catalyzes the transfer of formate to 5-phospho-ribosyl-glycinamide (GAR), producing 5-phospho-ribosyl-N-formylglycinamide (FGAR). Formate is provided by PurU via hydrolysis of 10-formyl-tetrahydrofolate. In Corynebacterium glutamicum (strain R), this protein is Formate-dependent phosphoribosylglycinamide formyltransferase.